Here is a 284-residue protein sequence, read N- to C-terminus: Pseudouridine-5'-phosphate glycosidase (284 aa).

Catalysis depends on Glu-17, which acts as the Proton donor. Substrate contacts are provided by Lys-77 and Val-97. Asp-126 is a binding site for Mn(2+). 128–130 contacts substrate; the sequence is SQD. Lys-147 serves as the catalytic Nucleophile.

The protein belongs to the pseudouridine-5'-phosphate glycosidase family. Homotrimer. It depends on Mn(2+) as a cofactor.

The catalysed reaction is D-ribose 5-phosphate + uracil = psi-UMP + H2O. Catalyzes the reversible cleavage of pseudouridine 5'-phosphate (PsiMP) to ribose 5-phosphate and uracil. Functions biologically in the cleavage direction, as part of a pseudouridine degradation pathway. The sequence is that of Pseudouridine-5'-phosphate glycosidase from Thermotoga petrophila (strain ATCC BAA-488 / DSM 13995 / JCM 10881 / RKU-1).